We begin with the raw amino-acid sequence, 311 residues long: MAKLITLGEILIEFNALSPGPLRHVSYFEKHVAGSEANYCVAFIKQGNECGIIAKVGDDEFGYNAIEWLRGQGVDVSHMKIDPSAPTGIFFIQRHYPVPLKSESIYYRKGSAGSKLSPEDVDEEYVKSADLVHSSGITLAISSTAKEAVYKAFEIASNRSFDTNIRLKLWSAEEAKREILKLLSKFHLKFLITDTDDSKIILGESDPDKAAKAFSDYAEIIVMKLGPKGAIVYYDGKKYYSSGYQVPVEDVTGAGDALGGTFLSLYYKGFEMEKALDYAIVASTLNVMIRGDQENLPTTKDIETFLREMKK.

Residues 34 to 35, 106 to 108, and Arg-166 each bind substrate; these read GS and YYR. Residues 164–166, 224–229, 253–256, and Ser-283 contribute to the ATP site; these read NIR, KLGPKG, and GAGD. The substrate site is built by Gly-253 and Asp-256. Asp-256 acts as the Proton acceptor in catalysis. Residue Asp-292 coordinates substrate.

This sequence belongs to the carbohydrate kinase PfkB family. In terms of assembly, homotetramer. It depends on a divalent metal cation as a cofactor.

The catalysed reaction is 2-dehydro-3-deoxy-D-gluconate + ATP = 2-dehydro-3-deoxy-6-phospho-D-gluconate + ADP + H(+). It functions in the pathway carbohydrate acid metabolism; 2-dehydro-3-deoxy-D-gluconate degradation; D-glyceraldehyde 3-phosphate and pyruvate from 2-dehydro-3-deoxy-D-gluconate: step 1/2. Its function is as follows. Involved in the degradation of glucose via the semi-phosphorylative Entner-Doudoroff pathway. Catalyzes the phosphorylation of 2-keto-3-deoxygluconate (KDG) to produce 2-keto-3-deoxy-6-phosphogluconate (KDPG). Can also use GTP, but not ADP or AMP, as a phosphoryl donor and 2-keto-D-gluconate (KG) as a phosphoryl acceptor. The polypeptide is 2-dehydro-3-deoxygluconokinase (Sulfurisphaera tokodaii (strain DSM 16993 / JCM 10545 / NBRC 100140 / 7) (Sulfolobus tokodaii)).